A 155-amino-acid chain; its full sequence is Aspartate carbamoyltransferase regulatory chain (155 aa).

Residues Cys112, Cys117, Cys138, and Cys141 each contribute to the Zn(2+) site.

The protein belongs to the PyrI family. As to quaternary structure, contains catalytic and regulatory chains. Zn(2+) is required as a cofactor.

Functionally, involved in allosteric regulation of aspartate carbamoyltransferase. This chain is Aspartate carbamoyltransferase regulatory chain, found in Methanocorpusculum labreanum (strain ATCC 43576 / DSM 4855 / Z).